Reading from the N-terminus, the 764-residue chain is Zinc finger CCCH domain-containing protein 24 (764 aa).

ANK repeat units follow at residues E108 to R138 and D143 to A175. The C3H1-type zinc finger occupies H321–F348. Disordered stretches follow at residues Q616 to V665 and K698 to S732. The span at S640–G659 shows a compositional bias: low complexity. Polar residues predominate over residues Q705 to G716.

The polypeptide is Zinc finger CCCH domain-containing protein 24 (Oryza sativa subsp. japonica (Rice)).